The following is a 147-amino-acid chain: Protein LOL1 (147 aa).

Residues 1-38 (MVASRAPRSESPWLKKPMHGVSGSTAMASTPWSSMPPS) are disordered. The segment covering 22 to 38 (SGSTAMASTPWSSMPPS) has biased composition (polar residues). The tract at residues 47-77 (QLVCSGCRNLLMYPAGATSICCAVCGTVTAV) is putative zinc finger.

The protein localises to the nucleus. Functionally, putative zinc finger that may be involved in programmed cell death and defense response. The protein is Protein LOL1 (LOL1) of Oryza sativa subsp. japonica (Rice).